Reading from the N-terminus, the 208-residue chain is Ribosomal RNA large subunit methyltransferase E (208 aa).

Residues glycine 63, tryptophan 65, aspartate 83, aspartate 99, and aspartate 124 each coordinate S-adenosyl-L-methionine. Catalysis depends on lysine 164, which acts as the Proton acceptor.

It belongs to the class I-like SAM-binding methyltransferase superfamily. RNA methyltransferase RlmE family.

Its subcellular location is the cytoplasm. It carries out the reaction uridine(2552) in 23S rRNA + S-adenosyl-L-methionine = 2'-O-methyluridine(2552) in 23S rRNA + S-adenosyl-L-homocysteine + H(+). Its function is as follows. Specifically methylates the uridine in position 2552 of 23S rRNA at the 2'-O position of the ribose in the fully assembled 50S ribosomal subunit. This chain is Ribosomal RNA large subunit methyltransferase E, found in Salmonella paratyphi A (strain ATCC 9150 / SARB42).